The sequence spans 486 residues: Membrane-bound lytic murein transglycosylase F (486 aa).

The N-terminal stretch at methionine 1 to alanine 21 is a signal peptide. The segment at leucine 22 to valine 268 is non-LT domain. Residues glycine 269–phenylalanine 486 are LT domain. Residue glutamate 313 is part of the active site.

This sequence in the N-terminal section; belongs to the bacterial solute-binding protein 3 family. In the C-terminal section; belongs to the transglycosylase Slt family.

The protein resides in the cell outer membrane. It carries out the reaction Exolytic cleavage of the (1-&gt;4)-beta-glycosidic linkage between N-acetylmuramic acid (MurNAc) and N-acetylglucosamine (GlcNAc) residues in peptidoglycan, from either the reducing or the non-reducing ends of the peptidoglycan chains, with concomitant formation of a 1,6-anhydrobond in the MurNAc residue.. Functionally, murein-degrading enzyme that degrades murein glycan strands and insoluble, high-molecular weight murein sacculi, with the concomitant formation of a 1,6-anhydromuramoyl product. Lytic transglycosylases (LTs) play an integral role in the metabolism of the peptidoglycan (PG) sacculus. Their lytic action creates space within the PG sacculus to allow for its expansion as well as for the insertion of various structures such as secretion systems and flagella. This chain is Membrane-bound lytic murein transglycosylase F, found in Serratia proteamaculans (strain 568).